A 115-amino-acid polypeptide reads, in one-letter code: Large ribosomal subunit protein bL19 (115 aa).

This sequence belongs to the bacterial ribosomal protein bL19 family.

Its function is as follows. This protein is located at the 30S-50S ribosomal subunit interface and may play a role in the structure and function of the aminoacyl-tRNA binding site. In Francisella tularensis subsp. mediasiatica (strain FSC147), this protein is Large ribosomal subunit protein bL19.